Here is a 255-residue protein sequence, read N- to C-terminus: Type III pantothenate kinase (255 aa).

Residue D6–V13 coordinates ATP. Substrate is bound by residues Y100 and G107–R110. The Proton acceptor role is filled by D109. D129 lines the K(+) pocket. An ATP-binding site is contributed by T132. Residue T184 participates in substrate binding.

The protein belongs to the type III pantothenate kinase family. In terms of assembly, homodimer. Requires NH4(+) as cofactor. K(+) is required as a cofactor.

It localises to the cytoplasm. The enzyme catalyses (R)-pantothenate + ATP = (R)-4'-phosphopantothenate + ADP + H(+). Its pathway is cofactor biosynthesis; coenzyme A biosynthesis; CoA from (R)-pantothenate: step 1/5. Its function is as follows. Catalyzes the phosphorylation of pantothenate (Pan), the first step in CoA biosynthesis. The protein is Type III pantothenate kinase of Ruminiclostridium cellulolyticum (strain ATCC 35319 / DSM 5812 / JCM 6584 / H10) (Clostridium cellulolyticum).